The sequence spans 141 residues: MGNKESKYLEMCSEEAWLNIPNIFKCIFIRKLFYNKWLKYQEKNLEKRLKLLSFYHPKKDFMGIRDMLDMAPGGSYFITDNVTEEFLMLVVKHPEDGSAEFTKLCLKGGCIVIDGFYYDDLHIFITENPNLYKYPLIHYDR.

Belongs to the asfivirus MGF 100 family.

In terms of biological role, plays a role in virus cell tropism, and may be required for efficient virus replication in macrophages. This African swine fever virus (isolate Pig/Kenya/KEN-50/1950) (ASFV) protein is Protein MGF 100-2L.